Here is a 227-residue protein sequence, read N- to C-terminus: MNRNVVLKLTGVERHYGQGDTLLTILKGADFSLAKGEIVALVAPSGTGKSTLLHVAGLLEHPDGGEVTINGHACDGLSDEKRTAIRRREIGFVYQFHHLLPEFSALENIMMPQLIAGLSWKEAQERAGQLLDYMRIGHRGSHRPAELSGGEQQRVAIARAVANAPTLLLADEPTGNLDPETASYVFDALEALVRQSGLAALIATHNHELAGRMDRRVTISDGKVVEF.

In terms of domain architecture, ABC transporter spans 7–227 (LKLTGVERHY…TISDGKVVEF (221 aa)). 43–50 (APSGTGKS) is a binding site for ATP.

The protein belongs to the ABC transporter superfamily. Lipoprotein translocase (TC 3.A.1.125) family. The complex is composed of two ATP-binding proteins (LolD) and two transmembrane proteins (LolC and LolE).

The protein localises to the cell inner membrane. In terms of biological role, part of the ABC transporter complex LolCDE involved in the translocation of mature outer membrane-directed lipoproteins, from the inner membrane to the periplasmic chaperone, LolA. Responsible for the formation of the LolA-lipoprotein complex in an ATP-dependent manner. This is Lipoprotein-releasing system ATP-binding protein LolD from Rhizobium etli (strain ATCC 51251 / DSM 11541 / JCM 21823 / NBRC 15573 / CFN 42).